The chain runs to 396 residues: DnaJ homolog subfamily A member 1 (396 aa).

The 63-residue stretch at 6–68 (TYYDVLGVKP…KKRELYDKGG (63 aa)) folds into the J domain. Lysine 66 bears the N6-acetyllysine mark. Phosphoserine is present on serine 83. The segment at 120 to 204 (GATRKLALQK…CNGRKIVREK (85 aa)) adopts a CR-type zinc-finger fold. Residues cysteine 133, cysteine 136, cysteine 149, cysteine 152, cysteine 176, cysteine 179, cysteine 192, and cysteine 195 each contribute to the Zn(2+) site. 4 CXXCXGXG motif repeats span residues 133 to 140 (CDKCEGRG), 149 to 156 (CPNCRGTG), 176 to 183 (CMECQGHG), and 192 to 199 (CKSCNGRK). A Phosphoserine modification is found at serine 334. The disordered stretch occupies residues 351–396 (VEETDEMDQVELVDFDPNQERRRHYNGEAYEDDEHHPRGGVQCQTS). Residues 352–364 (EETDEMDQVELVD) are compositionally biased toward acidic residues. Phosphotyrosine is present on tyrosine 380. Cysteine 393 is subject to Cysteine methyl ester. The S-farnesyl cysteine moiety is linked to residue cysteine 393. Residues 394-396 (QTS) constitute a propeptide, removed in mature form.

As to quaternary structure, identified in a complex with HSPA1B and BAX. Interacts with RNF207.

The protein localises to the membrane. It localises to the cytoplasm. The protein resides in the microsome. Its subcellular location is the mitochondrion. It is found in the nucleus. The protein localises to the perinuclear region. Functionally, co-chaperone for HSPA8/Hsc70. Plays a role in protein transport into mitochondria via its role as co-chaperone. Functions as co-chaperone for HSPA1B and negatively regulates the translocation of BAX from the cytosol to mitochondria in response to cellular stress, thereby protecting cells against apoptosis. Stimulates ATP hydrolysis, but not the folding of unfolded proteins mediated by HSPA1A (in vitro). Promotes apoptosis in response to cellular stress mediated by exposure to anisomycin or UV. This Pongo abelii (Sumatran orangutan) protein is DnaJ homolog subfamily A member 1 (DNAJA1).